Reading from the N-terminus, the 308-residue chain is Serine/threonine-protein phosphatase PP1 (308 aa).

Asp-64, His-66, Asp-92, and Asn-124 together coordinate Mn(2+). Residue His-125 is the Proton donor of the active site. Mn(2+) is bound by residues His-173 and His-248.

Belongs to the PPP phosphatase family. PP-1 subfamily. Mn(2+) is required as a cofactor.

The protein localises to the cytoplasm. The enzyme catalyses O-phospho-L-seryl-[protein] + H2O = L-seryl-[protein] + phosphate. It carries out the reaction O-phospho-L-threonyl-[protein] + H2O = L-threonyl-[protein] + phosphate. The sequence is that of Serine/threonine-protein phosphatase PP1 (pph-3) from Neurospora crassa (strain ATCC 24698 / 74-OR23-1A / CBS 708.71 / DSM 1257 / FGSC 987).